Consider the following 476-residue polypeptide: Aspartyl/glutamyl-tRNA(Asn/Gln) amidotransferase subunit B (476 aa).

Belongs to the GatB/GatE family. GatB subfamily. In terms of assembly, heterotrimer of A, B and C subunits.

The enzyme catalyses L-glutamyl-tRNA(Gln) + L-glutamine + ATP + H2O = L-glutaminyl-tRNA(Gln) + L-glutamate + ADP + phosphate + H(+). It catalyses the reaction L-aspartyl-tRNA(Asn) + L-glutamine + ATP + H2O = L-asparaginyl-tRNA(Asn) + L-glutamate + ADP + phosphate + 2 H(+). Its function is as follows. Allows the formation of correctly charged Asn-tRNA(Asn) or Gln-tRNA(Gln) through the transamidation of misacylated Asp-tRNA(Asn) or Glu-tRNA(Gln) in organisms which lack either or both of asparaginyl-tRNA or glutaminyl-tRNA synthetases. The reaction takes place in the presence of glutamine and ATP through an activated phospho-Asp-tRNA(Asn) or phospho-Glu-tRNA(Gln). This is Aspartyl/glutamyl-tRNA(Asn/Gln) amidotransferase subunit B from Clostridium botulinum (strain Langeland / NCTC 10281 / Type F).